We begin with the raw amino-acid sequence, 136 residues long: Histone H3.3 (136 aa).

The disordered stretch occupies residues 1–42 (MARTKQTARKSTGGKAPRKQLASKAARKSAPVSGGVKKPHRY). An N6,N6,N6-trimethyllysine; alternate modification is found at lysine 5. The residue at position 5 (lysine 5) is an N6,N6-dimethyllysine; alternate. Lysine 5 and lysine 10 each carry N6-methyllysine; alternate. Lysine 10 carries the N6-acetyllysine; alternate modification. A Phosphoserine modification is found at serine 11. Lysine 15 is subject to N6,N6-dimethyllysine; alternate. Residues lysine 15, lysine 19, lysine 24, lysine 28, and lysine 37 each carry the N6-acetyllysine; alternate modification. N6-methyllysine; alternate occurs at positions 19, 24, 28, and 37. 2 positions are modified to N6,N6,N6-trimethyllysine; alternate: lysine 28 and lysine 37. Residues lysine 28 and lysine 37 each carry the N6,N6-dimethyllysine; alternate modification. Lysine 57 and lysine 65 each carry N6-acetyllysine. The residue at position 80 (lysine 80) is an N6,N6,N6-trimethyllysine; alternate. At lysine 80 the chain carries N6,N6-dimethyllysine; alternate. At lysine 80 the chain carries N6-methyllysine; alternate.

This sequence belongs to the histone H3 family. In terms of assembly, the nucleosome is a histone octamer containing two molecules each of H2A, H2B, H3 and H4 assembled in one H3-H4 heterotetramer and two H2A-H2B heterodimers. The octamer wraps approximately 147 bp of DNA. Post-translationally, phosphorylated by IPL1 to form H3S10ph. H3S10ph promotes subsequent H3K14ac formation and is required for transcriptional activation through TBP recruitment to the promoters. Mono-, di- and trimethylated by the COMPASS complex to form H3K4me1/2/3. H3K4me activates gene expression by regulating transcription elongation and plays a role in telomere length maintenance. H3K4me enrichment correlates with transcription levels, and occurs in a 5' to 3' gradient with H3K4me3 enrichment at the 5'-end of genes, shifting to H3K4me2 and then H3K4me1. Methylated by SET2 to form H3K36me. H3K36me represses gene expression. Methylated by DOT1 to form H3K79me. H3K79me is required for association of SIR proteins with telomeric regions and for telomeric silencing. The COMPASS-mediated formation of H3K4me2/3 and the DOT1-mediated formation of H3K79me require H2BK123ub1. In terms of processing, acetylation of histone H3 leads to transcriptional activation. H3K14ac formation by GCN5 is promoted by H3S10ph. H3K14ac can also be formed by ESA1. H3K56ac formation occurs predominantly in newly synthesized H3 molecules during G1, S and G2/M of the cell cycle and may be involved in DNA repair.

It localises to the nucleus. The protein resides in the chromosome. Its function is as follows. Core component of nucleosome. Nucleosomes wrap and compact DNA into chromatin, limiting DNA accessibility to the cellular machineries which require DNA as a template. Histones thereby play a central role in transcription regulation, DNA repair, DNA replication and chromosomal stability. DNA accessibility is regulated via a complex set of post-translational modifications of histones, also called histone code, and nucleosome remodeling. This is Histone H3.3 (HHT3) from Candida albicans (strain SC5314 / ATCC MYA-2876) (Yeast).